Consider the following 260-residue polypeptide: MVKFYDRDISSRLLIGSALYPSPAIMQDAIRDSGAEIVTVSLRRETAGGKAGDQFWSLIRELGVTVLPNTAGCRSVREAVTTAKLARELFATSWIKLEVIADNDTLQPDVVGLVEAAQILIKDGFEVFPYCTEDLSVALRLVDAGCRVIMPWAAPIGSARGITNRDALKLLRDRLPDITLVVDAGLGAPSHAAEAMELGYDAVLLNTAIAKAEDPVAMARAFRLAVDAGRLGYQAGLMGARDFASPSTPVIGTPFWHAVS.

Lysine 96 acts as the Schiff-base intermediate with DXP in catalysis. 1-deoxy-D-xylulose 5-phosphate contacts are provided by residues glycine 157, 184–185 (AG), and 206–207 (NT).

This sequence belongs to the ThiG family. In terms of assembly, homotetramer. Forms heterodimers with either ThiH or ThiS.

It localises to the cytoplasm. It catalyses the reaction [ThiS sulfur-carrier protein]-C-terminal-Gly-aminoethanethioate + 2-iminoacetate + 1-deoxy-D-xylulose 5-phosphate = [ThiS sulfur-carrier protein]-C-terminal Gly-Gly + 2-[(2R,5Z)-2-carboxy-4-methylthiazol-5(2H)-ylidene]ethyl phosphate + 2 H2O + H(+). The protein operates within cofactor biosynthesis; thiamine diphosphate biosynthesis. Its function is as follows. Catalyzes the rearrangement of 1-deoxy-D-xylulose 5-phosphate (DXP) to produce the thiazole phosphate moiety of thiamine. Sulfur is provided by the thiocarboxylate moiety of the carrier protein ThiS. In vitro, sulfur can be provided by H(2)S. The sequence is that of Thiazole synthase from Rhodopseudomonas palustris (strain BisB5).